The sequence spans 327 residues: MIGLIIIVVIVLVALLLLFSFVPVGLWISAIAAGVKVGIGTLVGMRLRRVSPRKVISPLIKAHKAGLHLTTNQLESHYLAGGNVDRVVDANIAAQRADINLPFERGAAIDLAGRDVLEAVQMSVNPKVIETPFIAGVAMNGIEVKAKARITVRANIARLVGGAGEETIIARVGEGIVSTIGSSEHHTQVLENPDNISKTVLSKGLDSGTAFEILSIDIADVDISKNIGADLQTEQALADKNIAQAKAEERRAMAVAQEQEMKAKVQEMRSKVVEAEAEVPLAMAEALRSGNLGVKDYYNLKNVEADTGMRNSINQRTNQKDDESPDK.

Residues 2 to 22 (IGLIIIVVIVLVALLLLFSFV) form a helical membrane-spanning segment. Positions 305–327 (ADTGMRNSINQRTNQKDDESPDK) are disordered. Residues 318–327 (NQKDDESPDK) show a composition bias toward basic and acidic residues.

This sequence belongs to the flotillin-like FloA family. Homooligomerizes.

The protein localises to the cell membrane. It localises to the membrane raft. In terms of biological role, found in functional membrane microdomains (FMM) that may be equivalent to eukaryotic membrane rafts. FMMs are highly dynamic and increase in number as cells age. Flotillins are thought to be important factors in membrane fluidity. This chain is Flotillin-like protein FloA, found in Staphylococcus saprophyticus subsp. saprophyticus (strain ATCC 15305 / DSM 20229 / NCIMB 8711 / NCTC 7292 / S-41).